The chain runs to 319 residues: MTLLAWCVAWILDVVIGDPPHWPHPVRWIGRLIAVSQRVVRRICHSDRALRIGGGVMWLVVIGLTWGVAWGVLALAHGIHPWLGWLVEVWMIFTALAGRCLAQSAMAVARPLQAGDLAESRHKLSWIVGRDTSQLQPAQINRAVVETVAENTVDGIIAPLFFLLLGGAPLAMAYKAVNTLDSMVGYKHEKYRAIGMVSARLDDVANFLPARLSWLLLSLAAVLCREDGARALRTGWRDRYQHSSPNCAWPEATVAGALGIRLGGPNDYFGQRVEKPWIGDAVRDIAVDDISRTIRLMWVASSLALALFIGVRYWLVGAA.

A run of 5 helical transmembrane segments spans residues 56-76 (VMWL…LALA), 78-98 (GIHP…ALAG), 153-173 (VDGI…LAMA), 204-224 (VANF…AVLC), and 296-316 (LMWV…YWLV).

The protein belongs to the CobD/CbiB family.

The protein localises to the cell membrane. The protein operates within cofactor biosynthesis; adenosylcobalamin biosynthesis. Its function is as follows. Converts cobyric acid to cobinamide by the addition of aminopropanol on the F carboxylic group. This chain is Cobalamin biosynthesis protein CobD, found in Klebsiella pneumoniae subsp. pneumoniae (strain ATCC 700721 / MGH 78578).